The chain runs to 341 residues: Mytilin-2 (341 aa).

The N-terminal stretch at 1–24 is a signal peptide; it reads MFKQSYQLCLVFLLFVCFYQSVKG.

In terms of tissue distribution, component of the organic matrix of calcified shell layers like nacre and prisms.

It localises to the secreted. This is Mytilin-2 from Mytilus californianus (California mussel).